The chain runs to 386 residues: L-lactate dehydrogenase (386 aa).

Residues 1-380 enclose the FMN hydroxy acid dehydrogenase domain; sequence MIISASTDYR…TSDSLVQVTQ (380 aa). Tyr24 is a substrate binding site. Residues Ser106 and Gln127 each coordinate FMN. Tyr129 contributes to the substrate binding site. Thr155 contributes to the FMN binding site. Arg164 is a binding site for substrate. Lys251 serves as a coordination point for FMN. The active-site Proton acceptor is the His275. Residue Arg278 coordinates substrate. 306 to 330 contacts FMN; the sequence is DSGIRSGLDVVRMIALGADGVMLGR.

Belongs to the FMN-dependent alpha-hydroxy acid dehydrogenase family. Requires FMN as cofactor.

The protein resides in the cell inner membrane. The catalysed reaction is (S)-lactate + A = pyruvate + AH2. Functionally, catalyzes the conversion of L-lactate to pyruvate. Is coupled to the respiratory chain. In Pectobacterium atrosepticum (strain SCRI 1043 / ATCC BAA-672) (Erwinia carotovora subsp. atroseptica), this protein is L-lactate dehydrogenase.